Consider the following 340-residue polypeptide: MAPKIPLNVIFLGTDEFSIPILRKLIGCVQRVRVVSAGGKRQSRRGEIPLPPAAMEANANGLEYIKLQDGWKNFHMRPDDQLAITASFGRFVPFKILNQLPYGGINIHPSLLPKYRGAGPVYSTILNGDRLAGVTIQTMDSKQFDKGKSLAQAYLKLNGKETYTLLTKILSLGAAGMLEHVLLQSLYLPNCQTNTVAPQIHGRITDTGGLQLISKETFPSFQESWAKKITPEDAHVNFESMNTQQIYNMSRAFNHVWCILNNKKVFLYDVHPLHSTSAEDWIHMKPGEFALLEKNLLLVKTLDHVMVIKGGIRLSARKIVDPVEWGKTFNSGRGGRFQYV.

This sequence belongs to the Fmt family.

It is found in the mitochondrion. It localises to the mitochondrion matrix. The protein resides in the cytoplasm. The catalysed reaction is L-methionyl-tRNA(fMet) + (6R)-10-formyltetrahydrofolate = N-formyl-L-methionyl-tRNA(fMet) + (6S)-5,6,7,8-tetrahydrofolate + H(+). Functionally, formylates methionyl-tRNA in mitochondria and the cytoplasm. Responsible for the formylation of the N-terminally formylated (Nt-formylated) mitochondrial matrix proteins that are encoded by mitochondrial DNA. Nt-formylated proteins in the cytoplasm are strongly up-regulated in stationary phase or upon starvation for specific amino acids and are targeted for degradation by an E3 ubiquitin ligase-mediated fMet/N-end rule pathway. Increased Nt-formylation of cytosolic proteins appears to be important for adaptation to these stresses. The sequence is that of Putative methionyl-tRNA formyltransferase (fmt1) from Schizosaccharomyces pombe (strain 972 / ATCC 24843) (Fission yeast).